A 201-amino-acid polypeptide reads, in one-letter code: Small ribosomal subunit protein uS4c (201 aa).

The disordered stretch occupies residues 15–43; it reads LGALPGLTNKRPRAGSDLRNQSRSGKRSQ. Residues 89–149 form the S4 RNA-binding domain; sequence MRLDNILFRL…DEQKSIALIQ (61 aa).

As to quaternary structure, component of the chloroplast small ribosomal subunit (SSU). Mature 70S chloroplast ribosomes of higher plants consist of a small (30S) and a large (50S) subunit. The 30S small subunit contains 1 molecule of ribosomal RNA (16S rRNA) and 24 different proteins. The 50S large subunit contains 3 rRNA molecules (23S, 5S and 4.5S rRNA) and 33 different proteins.

The protein localises to the plastid. Its subcellular location is the chloroplast. In terms of biological role, component of the chloroplast ribosome (chloro-ribosome), a dedicated translation machinery responsible for the synthesis of chloroplast genome-encoded proteins, including proteins of the transcription and translation machinery and components of the photosynthetic apparatus. The polypeptide is Small ribosomal subunit protein uS4c (rps4) (Spinacia oleracea (Spinach)).